A 105-amino-acid polypeptide reads, in one-letter code: Heat shock protein HspQ (105 aa).

The disordered stretch occupies residues serine 75–asparagine 105.

This sequence belongs to the HspQ family.

The protein resides in the cytoplasm. In terms of biological role, involved in the degradation of certain denaturated proteins, including DnaA, during heat shock stress. The sequence is that of Heat shock protein HspQ from Escherichia coli O127:H6 (strain E2348/69 / EPEC).